The primary structure comprises 258 residues: C1q-related factor (258 aa).

Residues Met-1–Gly-16 form the signal peptide. The disordered stretch occupies residues Gly-39–Ser-120. Residues Gly-67–Lys-77 show a composition bias toward low complexity. The region spanning Gly-67–Gly-115 is the Collagen-like domain. Pro residues predominate over residues Pro-78–Pro-95. Residues Thr-125–Asp-258 form the C1q domain.

In terms of assembly, interacts with ADGRB3. Forms heterooligomers with C1QL4, when proteins are coexpressed; this interaction does not occur after secretion. In terms of tissue distribution, expressed in brainstem. More abundant in areas of the nervous system involved in motor function, such as the Purkinje cells of the cerebellum, the accessory olivary nucleus, the pons and the red nucleus.

The protein localises to the secreted. May regulate the number of excitatory synapses that are formed on hippocampus neurons. Has no effect on inhibitory synapses. In Mus musculus (Mouse), this protein is C1q-related factor (C1ql1).